Consider the following 269-residue polypeptide: Alcohol dehydrogenase-related 31 kDa protein (269 aa).

Tyr11–Leu34 contributes to the NAD(+) binding site. Ser139 is a binding site for substrate. Tyr152 functions as the Proton acceptor in the catalytic mechanism.

Belongs to the short-chain dehydrogenases/reductases (SDR) family.

This is Alcohol dehydrogenase-related 31 kDa protein (Adhr) from Drosophila lebanonensis (Fruit fly).